The sequence spans 1001 residues: 26S proteasome non-ATPase regulatory subunit 1 homolog B (1001 aa).

N-acetylalanine is present on Ala2. A Glycyl lysine isopeptide (Lys-Gly) (interchain with G-Cter in ubiquitin) cross-link involves residue Lys166. 10 PC repeats span residues 412 to 447 (SATA…GGSP), 452 to 485 (GALY…EVIQ), 487 to 521 (GACL…VAGE), 522 to 555 (AAGI…EKII), 557 to 590 (GLAL…IIRY), 591 to 626 (GGMY…DVRR), 627 to 659 (TAVL…PHVR), 661 to 695 (GAAL…FVRQ), 696 to 736 (GALI…DTMS), and 739 to 771 (GAIL…TAVI). Disordered regions lie at residues 853–896 (AKKE…TVEK) and 954–1001 (SLTD…YASP). The span at 854-863 (KKEAEQKAKA) shows a compositional bias: basic and acidic residues. Phosphoserine is present on Ser889. The segment covering 961–985 (STASPAVGAEAAGQAQQAATTSAMA) has biased composition (low complexity).

This sequence belongs to the proteasome subunit S1 family. As to quaternary structure, component of the 19S regulatory particle (RP/PA700) base subcomplex of the 26S proteasome. The 26S proteasome is composed of a core protease (CP), known as the 20S proteasome, capped at one or both ends by the 19S regulatory particle (RP/PA700). The RP/PA700 complex is composed of at least 17 different subunits in two subcomplexes, the base and the lid, which form the portions proximal and distal to the 20S proteolytic core, respectively.

Its function is as follows. Acts as a regulatory subunit of the 26 proteasome which is involved in the ATP-dependent degradation of ubiquitinated proteins. The polypeptide is 26S proteasome non-ATPase regulatory subunit 1 homolog B (RPN2B) (Arabidopsis thaliana (Mouse-ear cress)).